Reading from the N-terminus, the 295-residue chain is UDP-N-acetylenolpyruvoylglucosamine reductase (295 aa).

The FAD-binding PCMH-type domain occupies 25 to 189 (RVGGPADLFA…LEALFRLDQR (165 aa)). Residue Arg169 is part of the active site. Ser218 acts as the Proton donor in catalysis. The active site involves Glu288.

It belongs to the MurB family. FAD is required as a cofactor.

Its subcellular location is the cytoplasm. It carries out the reaction UDP-N-acetyl-alpha-D-muramate + NADP(+) = UDP-N-acetyl-3-O-(1-carboxyvinyl)-alpha-D-glucosamine + NADPH + H(+). The protein operates within cell wall biogenesis; peptidoglycan biosynthesis. Functionally, cell wall formation. This chain is UDP-N-acetylenolpyruvoylglucosamine reductase, found in Pelobacter propionicus (strain DSM 2379 / NBRC 103807 / OttBd1).